A 166-amino-acid chain; its full sequence is Endoribonuclease YbeY (166 aa).

Zn(2+) is bound by residues H132, H136, and H142.

It belongs to the endoribonuclease YbeY family. Requires Zn(2+) as cofactor.

It is found in the cytoplasm. Functionally, single strand-specific metallo-endoribonuclease involved in late-stage 70S ribosome quality control and in maturation of the 3' terminus of the 16S rRNA. The chain is Endoribonuclease YbeY from Clostridium botulinum (strain ATCC 19397 / Type A).